A 1376-amino-acid chain; its full sequence is Mediator of RNA polymerase II transcription subunit 23 (1376 aa).

Low complexity predominate over residues 1346-1369 (SNSSSVQQTSSASSPTAQSTAGAA). The disordered stretch occupies residues 1346 to 1376 (SNSSSVQQTSSASSPTAQSTAGAAIPLSVTQ).

The protein belongs to the Mediator complex subunit 23 family. As to quaternary structure, component of the Mediator complex.

The protein localises to the nucleus. Functionally, component of the Mediator complex, a coactivator involved in the regulated transcription of nearly all RNA polymerase II-dependent genes. Mediator functions as a bridge to convey information from gene-specific regulatory proteins to the basal RNA polymerase II transcription machinery. Mediator is recruited to promoters by direct interactions with regulatory proteins and serves as a scaffold for the assembly of a functional preinitiation complex with RNA polymerase II and the general transcription factors. The chain is Mediator of RNA polymerase II transcription subunit 23 (med23) from Danio rerio (Zebrafish).